We begin with the raw amino-acid sequence, 43 residues long: ATCDALSFSSKWLTVNHSACAIHCLTKGYKGGRCVNTICNCRN.

3 disulfides stabilise this stretch: C3–C34, C20–C39, and C24–C41.

It localises to the secreted. In terms of biological role, antibacterial peptide active against Gram-positive and Gram-negative bacteria. In Palomena prasina (Green shield bug), this protein is Defensin.